The chain runs to 230 residues: Large ribosomal subunit protein uL1 (230 aa).

This sequence belongs to the universal ribosomal protein uL1 family. In terms of assembly, part of the 50S ribosomal subunit.

In terms of biological role, binds directly to 23S rRNA. The L1 stalk is quite mobile in the ribosome, and is involved in E site tRNA release. Protein L1 is also a translational repressor protein, it controls the translation of the L11 operon by binding to its mRNA. The polypeptide is Large ribosomal subunit protein uL1 (Lactobacillus acidophilus (strain ATCC 700396 / NCK56 / N2 / NCFM)).